A 282-amino-acid chain; its full sequence is Acyl-CoA-binding domain-containing protein 6 (282 aa).

Residues 1–31 (MASSFLPAGAITGDSGGELSSGDDSGEVEFP) form a disordered region. The region spanning 42-127 (LAELFEKAAA…VKKLDPGWNP (86 aa)) is the ACB domain. Residues 69–73 (YARYK) and Lys-95 contribute to the an acyl-CoA site. Residue Ser-106 is modified to Phosphoserine. Residue Tyr-114 participates in an acyl-CoA binding. 2 ANK repeats span residues 191 to 220 (EGRALLHWACDRGHKELVTVLLQHRADINC) and 224 to 253 (EGQTALHYASACEFLDIVELLLQSGADPTL).

Monomer. In terms of tissue distribution, detected in placenta and spleen (at protein level). Detected in placenta, umbilical cord blood, CD34-positive hematopoietic progenitor cells and bone marrow.

The protein localises to the cytoplasm. It localises to the nucleus. Its function is as follows. Binds long-chain acyl-coenzyme A molecules with a strong preference for unsaturated C18:1-CoA, lower affinity for unsaturated C20:4-CoA, and very weak affinity for saturated C16:0-CoA. Does not bind fatty acids. Plays a role in protein N-myristoylation. This chain is Acyl-CoA-binding domain-containing protein 6 (ACBD6), found in Homo sapiens (Human).